The chain runs to 384 residues: ATP synthase subunit a (384 aa).

A disordered region spans residues 22–60; sequence PAPAAAPVEQHGAPAPEAAAPDAHAAPAGEHGAAVEAHA. A run of 6 helical transmembrane segments spans residues 131–151, 189–209, 218–238, 258–278, 293–313, and 319–339; these read KHVMMMWFASALLLVVVLAAV, FVPYLVTAFFFILFLNLFGLI, NLSVTVALALFTFLITQYAAI, LAPLWIIMIPVEFLGLFTKPF, FVILALLGLIFALGTPWVAFG, and LGIFLLELFVAFVQAYIFTML. Positions 355 to 384 are disordered; it reads HGHAEEHGHAGPGMGSEHGSHVAGASPGHG.

This sequence belongs to the ATPase A chain family. F-type ATPases have 2 components, CF(1) - the catalytic core - and CF(0) - the membrane proton channel. CF(1) has five subunits: alpha(3), beta(3), gamma(1), delta(1), epsilon(1). CF(0) has three main subunits: a(1), b(2) and c(9-12). The alpha and beta chains form an alternating ring which encloses part of the gamma chain. CF(1) is attached to CF(0) by a central stalk formed by the gamma and epsilon chains, while a peripheral stalk is formed by the delta and b chains.

It localises to the cell inner membrane. In terms of biological role, key component of the proton channel; it plays a direct role in the translocation of protons across the membrane. The sequence is that of ATP synthase subunit a from Anaeromyxobacter dehalogenans (strain 2CP-1 / ATCC BAA-258).